The following is a 596-amino-acid chain: Nitrite reductase (596 aa).

Positions 1–29 (MRQRTPFARPGLLASAALALVLGPLAVAA) are cleaved as a signal peptide. Residues 30 to 76 (QEQAAPPKDPAAALEDHKTKTDNRYEPSLDNLAQQDVAALGAPEGIP) form an N-terminal tail region. H46 contacts heme c. Positions 54 and 57 each coordinate heme d1. A Cytochrome c domain is found at 77-162 (ALSDAQYNEA…ANYLLLDPAA (86 aa)). 5 residues coordinate heme c: C94, C97, H98, K108, and Y122. The heme d1 site is built by W138, R203, H229, R232, R245, R272, Y292, R420, Q536, and T583. Residues 163–596 (PPEFGMKEMR…NVYNTMTDTY (434 aa)) are D1-heme domain.

In terms of assembly, homodimer. Heme c is required as a cofactor. It depends on heme as a cofactor.

It is found in the periplasm. It catalyses the reaction nitric oxide + Fe(III)-[cytochrome c] + H2O = Fe(II)-[cytochrome c] + nitrite + 2 H(+). The enzyme catalyses A + NH4(+) + H2O = hydroxylamine + AH2 + H(+). Functionally, inactivation of this cytochrome oxidase results in the loss of nitrite and nitric oxide reductase activities, but not of nitrous oxide reductase activity. The polypeptide is Nitrite reductase (nirS) (Paracoccus denitrificans (strain Pd 1222)).